The sequence spans 1333 residues: MSSANYISDEVPPDMVSPHDHRPSKDEPLKHLDTVIALYDFPGTQSSHLPLNLGDTIHVLSKSATGWWDGVVMGNSGELQRGWFPHNYVRSVNYVQPVLKKLKDNKDLDSITAANTAANVVMPSLTNLIQKSLQESERNSPANSTRKNSVVSFASSETSMPSDSKYTQQQTNTNQNSPEYQSISLPSTRDHSTVEMQLPSQQSSISHTLTGFGIGDDEIIPMEVEEAEKLVEEYRLKYNKTVTWIPRTSTKGDIIFYCEQLDVYCESLPLILFDGEASSPNLEYPGSDVIMDPTPISVQGSQSMENVLDTREGSAAGSFDSTKRDSNVSMSTQSSGSSYHRFSRPFFSVDNLFYKHSSDIGTWNELKEQCNYILDLMLKAIKDQNRQFFSTHFSRLNKLVVALCAAVRLNQEDYIDTKYENTTRRKLKRVCASFAQIYINGILHLSVLHYSLEGFNEGRLFGYDMGKLNRSSSSSAFQSPASSLSTIRQGSDDSTRFAQKLSQDRNSEGNGDMNYINQLVYEIDNLRENVNSIVKIFLKLSANKKIKNSDYDSSDASDDEGEDRFDILPQVYPRFLVDEFNGGNWCNPFFSTKNTVLNVSGDDLKNRYHTKIIIDHSAYDSLSQYVDKIVDACENILEALDPKVQNTFYYNEMLRNERNTQILRLTYKSLYHCSAMVDLIESFDFTVFCSVKRHTGNAIDTEDESYENPSVWGDHYDSNLSFDYPVVLEFFRLKQELHDLVAKIIMATQSLTLEDPEVFKGLKEEDPLFYNREISKIPKEKAALLLSSILKEQLSFKDGGAISLNPDTLLSGYLVEIAKTTKTVLLITQQLIEERETIINYATRVMQDNFDVQLLLVERNNTSSSEKADDNSYYVGGHKKSTDVPWYLEGDDEYELLLDVKGNIKGGSKEALVSHLTHHLSLDSNFNAVFLLMFSSMMSLGELISLLIARFNIEPPEGLSYEEYNLWVSKKRNPIRLRVINIMKLLLEKNWSMSYYNEPVLRRWLTFAHSDQVQTYSLGNLLVNYLERLLRGERIYVERDPVIPNTKPPAPLTKGSSLSKKPRVMDIDYVELARQLTLREFKLYCKITKFACLAKVWGKKSGLSESIDSITQFIKASNQLTNFVGYMILRKADPKKRVQIIRYFIQVADKCRQYNNFSSMTAIISALYSSPIHRLKKTWEYMNADALSNLKNMNKLMNSSRNFNEYRDVLKFIGSEPCVPFFGVYLSDLTFVYHGNPDYLYNRTRQVNFAKRAKTSEIVSGIDRFKTTGYNFQEVPEIQKFLDAWFEKCPTIDEQYQISLNLEPREQAVGASNSNSTTNATTNIKSFKPFSLK.

The segment at M1 to E27 is disordered. The span at S17–E27 shows a compositional bias: basic and acidic residues. The region spanning K30–Y94 is the SH3 domain. Positions L133 to Y166 are enriched in polar residues. Disordered regions lie at residues L133–S206 and S474–F497. Residues T167–N176 are compositionally biased toward low complexity. Composition is skewed to polar residues over residues S177–S187 and V194–S206. Residues S474–S485 show a composition bias toward low complexity. Positions V900–R1034 constitute an N-terminal Ras-GEF domain. The Ras-GEF domain occupies D1068–R1305.

Its function is as follows. Promotes the exchange of Ras-bound GDP by GTP. This protein positively controls the level of cellular cAMP at start, the stage at which the yeast cell division cycle is triggered. This Candida albicans (strain SC5314 / ATCC MYA-2876) (Yeast) protein is Cell division control protein 25 (CDC25).